The chain runs to 246 residues: MIVQHRTAPVTGSAHFAFTDRWGGVSAAPYGELNLGGAVGDDPAAVGANRERAARHLGLDPAHVVWMNQVHGRDVAVVDGPWGADAEIPAVDAVVTARRGLALAVLTADCTPVLLADPVAGVVGAAHAGRPGLVAGVVSAAVEAMVALGAHPSRITAHTGPAVCGRCYEVPEEMRAEVAGAVPGTWSETSWGTPAVDVTGGVHAQLAALGVTDRHASPFCTLESGDHFSYRRDRTTGRLAGYVWLD.

Zn(2+) contacts are provided by His71, Cys110, and His127.

It belongs to the purine nucleoside phosphorylase YfiH/LACC1 family. In terms of assembly, homodimer. Cu(2+) is required as a cofactor. The cofactor is Zn(2+).

It carries out the reaction adenosine + phosphate = alpha-D-ribose 1-phosphate + adenine. The catalysed reaction is S-methyl-5'-thioadenosine + phosphate = 5-(methylsulfanyl)-alpha-D-ribose 1-phosphate + adenine. The enzyme catalyses inosine + phosphate = alpha-D-ribose 1-phosphate + hypoxanthine. It catalyses the reaction adenosine + H2O + H(+) = inosine + NH4(+). Its function is as follows. Purine nucleoside enzyme that catalyzes the phosphorolysis of adenosine and inosine nucleosides, yielding D-ribose 1-phosphate and the respective free bases, adenine and hypoxanthine. Also catalyzes the phosphorolysis of S-methyl-5'-thioadenosine into adenine and S-methyl-5-thio-alpha-D-ribose 1-phosphate. Also has adenosine deaminase activity. This Streptomyces griseus protein is Purine nucleoside phosphorylase ORF3.